We begin with the raw amino-acid sequence, 199 residues long: Octanoyltransferase (199 aa).

Residues 27-199 (SNSCDELWLL…FVQYFLTQFK (173 aa)) form the BPL/LPL catalytic domain. Substrate is bound by residues 66–73 (RGGQVTYH), 133–135 (SIG), and 146–148 (GIA). Cysteine 164 functions as the Acyl-thioester intermediate in the catalytic mechanism.

It belongs to the LipB family.

It is found in the cytoplasm. It catalyses the reaction octanoyl-[ACP] + L-lysyl-[protein] = N(6)-octanoyl-L-lysyl-[protein] + holo-[ACP] + H(+). It functions in the pathway protein modification; protein lipoylation via endogenous pathway; protein N(6)-(lipoyl)lysine from octanoyl-[acyl-carrier-protein]: step 1/2. Functionally, catalyzes the transfer of endogenously produced octanoic acid from octanoyl-acyl-carrier-protein onto the lipoyl domains of lipoate-dependent enzymes. Lipoyl-ACP can also act as a substrate although octanoyl-ACP is likely to be the physiological substrate. The protein is Octanoyltransferase of Legionella pneumophila (strain Corby).